A 246-amino-acid polypeptide reads, in one-letter code: Probable transcriptional regulatory protein APJL_1171 (246 aa).

It belongs to the TACO1 family.

It is found in the cytoplasm. The protein is Probable transcriptional regulatory protein APJL_1171 of Actinobacillus pleuropneumoniae serotype 3 (strain JL03).